A 760-amino-acid polypeptide reads, in one-letter code: Rho GTPase-activating protein 26 (760 aa).

A BAR domain is found at 7–262 (EFSECCLDSP…MKENPHEHKN (256 aa)). In terms of domain architecture, PH spans 265–369 (PYTMEGYLYV…WMEAMDGREP (105 aa)). A Rho-GAP domain is found at 383 to 568 (AQLDSIGFSI…ILIENHEKIF (186 aa)). 2 disordered regions span residues 571–617 (VPET…ESRN) and 658–701 (PNRP…SPIS). Over residues 605 to 617 (HTAQPNEKQESRN) the composition is skewed to polar residues. A compositionally biased stretch (low complexity) spans 674-701 (LSPSWPMFSAPSSPMPTSSTSSDSSPIS). One can recognise an SH3 domain in the interval 702 to 760 (SPLRKARALYACKAEHDSELSFTAGTVFDNVHPSQEPGWLEGTLNGKTGLIPENYVEFL).

As to quaternary structure, binds to the C-terminus of PTK2/FAK1. In terms of tissue distribution, detected in embryonic brain and liver, and at low levels in embryonic eye, heart, lung, intestine and skeletal muscle.

It is found in the cell junction. The protein resides in the focal adhesion. Its subcellular location is the cytoplasm. It localises to the cytoskeleton. The protein localises to the endosome membrane. Functionally, GTPase-activating protein for RHOA and CDC42. May be involved in the regulation of neosynthesized protein export through a Rab-endososomal dependent export route. The protein is Rho GTPase-activating protein 26 (ARHGAP26) of Gallus gallus (Chicken).